Reading from the N-terminus, the 310-residue chain is MAARIVFAGTPDFAVPGLDALVEAGVRPVAVFTQPDRPAGRGRRLTPPPVKRAAERHGLGVHQPERLGAEEAEQIRALAPDLMVVVAYGQILRRNVLDVPRFGCVNVHASLLPRWRGAAPIQRALLAGDEQTGVTLMQMDEGLDTGPMLARKATPISADETAGSLHDRLARIGADLLVAHLPEILAGAITPEPQPDDGVTYAAKLTNDESWLDPTEPAEQLERRVRALAPVPGARLQLGETPVRVLAARACAGRPEDRAGTVAAVGSGGIEVATGEGRLEITRLKPAGGREQTAADYLNGRRLVPGEPVQ.

110 to 113 serves as a coordination point for (6S)-5,6,7,8-tetrahydrofolate; the sequence is SLLP.

The protein belongs to the Fmt family.

It carries out the reaction L-methionyl-tRNA(fMet) + (6R)-10-formyltetrahydrofolate = N-formyl-L-methionyl-tRNA(fMet) + (6S)-5,6,7,8-tetrahydrofolate + H(+). In terms of biological role, attaches a formyl group to the free amino group of methionyl-tRNA(fMet). The formyl group appears to play a dual role in the initiator identity of N-formylmethionyl-tRNA by promoting its recognition by IF2 and preventing the misappropriation of this tRNA by the elongation apparatus. This chain is Methionyl-tRNA formyltransferase, found in Halorhodospira halophila (strain DSM 244 / SL1) (Ectothiorhodospira halophila (strain DSM 244 / SL1)).